The following is a 361-amino-acid chain: DNA replication and repair protein RecF (361 aa).

Gly30–Thr37 contacts ATP.

It belongs to the RecF family.

It is found in the cytoplasm. The RecF protein is involved in DNA metabolism; it is required for DNA replication and normal SOS inducibility. RecF binds preferentially to single-stranded, linear DNA. It also seems to bind ATP. The protein is DNA replication and repair protein RecF of Pectobacterium atrosepticum (strain SCRI 1043 / ATCC BAA-672) (Erwinia carotovora subsp. atroseptica).